The primary structure comprises 627 residues: MLLFLWIETSNEYFNFDWVIFLGTGYWFYWSIFILSLAGILTAYSSLLLLLGLLLLWEGIELYLHLCHKILILLVILPCVILMFIICKFWKERWLVAGLSLQIFAPYVHLVSITVMVILFWPVAIYVARLEREVRMRRYRMTHSEKKRLKKCNVIARLRGLQVAVGLPFLLIFLSLCLMPLGIYSPCIQEKENLGPKPTLFGHRGAPMLGPENTMMSFEKAVEHGAHGLETDVHLSYDRVPFLMHDFDLRRTTNIREVQPESAFKNPATFSWDFLSTLNAGKWFVKPELKPFYNMKPLSKADKERARNQSIPTLADLLTLAKKERKFVIFDLRGPPPRHPLRHTFVRQVVSVILASKIEQHLIFWLPAHDRRYVRSMAPGFQHVGHLVSVKTLAKNNISIINVDYKKLFPNGLRDYKAANIRINVYTINEPWLFSLAWCSRINSVTTDNIGLLSQLNHPHFFMTPKFYMFIWLLVDIISVLFIVAIFCFHWRRETIKEKLFETSSTLTDTQSRSENEEDLHIAMKPARVVESPWTLAALYPALSKSGKEHQGRFNFAAPSKKLVPIKNAVTPLKPGKHDIQPPMPTTVFELTQAPSRQAKSKATFQTTLPTLKVDKPTMPSVEVPYP.

Residues 1-17 (MLLFLWIETSNEYFNFD) lie on the Cytoplasmic side of the membrane. The helical transmembrane segment at 18–38 (WVIFLGTGYWFYWSIFILSLA) threads the bilayer. A topological domain (extracellular) is located at residue Gly-39. The chain crosses the membrane as a helical span at residues 40 to 60 (ILTAYSSLLLLLGLLLLWEGI). Residues 61–69 (ELYLHLCHK) are Cytoplasmic-facing. A helical membrane pass occupies residues 70 to 90 (ILILLVILPCVILMFIICKFW). Residues 91–107 (KERWLVAGLSLQIFAPY) lie on the Extracellular side of the membrane. The chain crosses the membrane as a helical span at residues 108 to 128 (VHLVSITVMVILFWPVAIYVA). The Cytoplasmic portion of the chain corresponds to 129–162 (RLEREVRMRRYRMTHSEKKRLKKCNVIARLRGLQ). The chain crosses the membrane as a helical span at residues 163 to 183 (VAVGLPFLLIFLSLCLMPLGI). Residues 184-468 (YSPCIQEKEN…PHFFMTPKFY (285 aa)) are Extracellular-facing. The region spanning 198-457 (PTLFGHRGAP…DNIGLLSQLN (260 aa)) is the GP-PDE domain. A divalent metal cation-binding residues include Glu-230, Asp-232, and His-245. N-linked (GlcNAc...) asparagine glycosylation is found at Asn-308 and Asn-397. A helical membrane pass occupies residues 469-489 (MFIWLLVDIISVLFIVAIFCF). The Cytoplasmic portion of the chain corresponds to 490-627 (HWRRETIKEK…TMPSVEVPYP (138 aa)).

It belongs to the glycerophosphoryl diester phosphodiesterase family.

Its subcellular location is the membrane. In Macaca fascicularis (Crab-eating macaque), this protein is Glycerophosphodiester phosphodiesterase domain-containing protein 4 (GDPD4).